A 360-amino-acid chain; its full sequence is Peptide chain release factor 1 (360 aa).

N5-methylglutamine is present on Q237.

This sequence belongs to the prokaryotic/mitochondrial release factor family. Post-translationally, methylated by PrmC. Methylation increases the termination efficiency of RF1.

It localises to the cytoplasm. Functionally, peptide chain release factor 1 directs the termination of translation in response to the peptide chain termination codons UAG and UAA. In Saccharophagus degradans (strain 2-40 / ATCC 43961 / DSM 17024), this protein is Peptide chain release factor 1.